The primary structure comprises 450 residues: Sulfide:quinone oxidoreductase, mitochondrial (450 aa).

Residues 53-54 (SG), Glu-75, Gln-83, and Val-118 contribute to the FAD site. Lys-173 carries the N6-acetyllysine modification. Residue Cys-201 is the Cysteine persulfide intermediate of the active site. Cys-201 and Cys-379 form a disulfide bridge. Residue Asp-336 coordinates FAD. Residue Ser-343 is modified to Phosphoserine. Residue 344-347 (KTAA) participates in FAD binding. Residue Cys-379 is the Cysteine persulfide intermediate of the active site.

Belongs to the SQRD family. FAD is required as a cofactor.

It localises to the mitochondrion. The enzyme catalyses ubiquinone-10 + hydrogen sulfide + sulfite + 2 H(+) = ubiquinol-10 + thiosulfate. It catalyses the reaction a quinone + hydrogen sulfide + glutathione + H(+) = S-sulfanylglutathione + a quinol. It carries out the reaction ubiquinone-10 + hydrogen sulfide + glutathione + H(+) = S-sulfanylglutathione + ubiquinol-10. Catalyzes the oxidation of hydrogen sulfide with the help of a quinone, such as ubiquinone-10, giving rise to thiosulfate and ultimately to sulfane (molecular sulfur) atoms. Requires an additional electron acceptor; can use sulfite, sulfide or cyanide (in vitro). It is believed the in vivo electron acceptor is glutathione. This Homo sapiens (Human) protein is Sulfide:quinone oxidoreductase, mitochondrial.